A 257-amino-acid polypeptide reads, in one-letter code: Homeobox protein goosecoid (257 aa).

The segment at residues 160–219 is a DNA-binding region (homeobox); that stretch reads KRRHRTIFTDEQLEALENLFQETKYPDVGTREQLARKVHLREEKVEVWFKNRRAKWRRQK. The interval 213–257 is disordered; that stretch reads AKWRRQKRSSSEESENAEKWNKTSSSKASPEKREEEGKSDLDSDS. The span at 241-257 shows a compositional bias: basic and acidic residues; the sequence is SPEKREEEGKSDLDSDS.

It belongs to the paired homeobox family. Bicoid subfamily.

It is found in the nucleus. Its function is as follows. Regulates chordin (CHRD). May play a role in spatial programing within discrete embryonic fields or lineage compartments during organogenesis. In concert with NKX3-2, plays a role in defining the structural components of the middle ear; required for the development of the entire tympanic ring. Probably involved in the regulatory networks that define neural crest cell fate specification and determine mesoderm cell lineages in mammals. The chain is Homeobox protein goosecoid (GSC) from Homo sapiens (Human).